The chain runs to 240 residues: Pyridoxine 5'-phosphate synthase (240 aa).

3-amino-2-oxopropyl phosphate is bound at residue N7. 9–10 (DH) is a binding site for 1-deoxy-D-xylulose 5-phosphate. Residue R18 participates in 3-amino-2-oxopropyl phosphate binding. The active-site Proton acceptor is the H43. The 1-deoxy-D-xylulose 5-phosphate site is built by R45 and H50. E70 functions as the Proton acceptor in the catalytic mechanism. T100 lines the 1-deoxy-D-xylulose 5-phosphate pocket. The Proton donor role is filled by H191. Residues G192 and 213–214 (GH) contribute to the 3-amino-2-oxopropyl phosphate site.

Belongs to the PNP synthase family. As to quaternary structure, homooctamer; tetramer of dimers.

The protein resides in the cytoplasm. It carries out the reaction 3-amino-2-oxopropyl phosphate + 1-deoxy-D-xylulose 5-phosphate = pyridoxine 5'-phosphate + phosphate + 2 H2O + H(+). It functions in the pathway cofactor biosynthesis; pyridoxine 5'-phosphate biosynthesis; pyridoxine 5'-phosphate from D-erythrose 4-phosphate: step 5/5. Its function is as follows. Catalyzes the complicated ring closure reaction between the two acyclic compounds 1-deoxy-D-xylulose-5-phosphate (DXP) and 3-amino-2-oxopropyl phosphate (1-amino-acetone-3-phosphate or AAP) to form pyridoxine 5'-phosphate (PNP) and inorganic phosphate. The chain is Pyridoxine 5'-phosphate synthase from Crocosphaera subtropica (strain ATCC 51142 / BH68) (Cyanothece sp. (strain ATCC 51142)).